A 555-amino-acid chain; its full sequence is Ribonuclease J2 (555 aa).

Zn(2+)-binding residues include His-74, His-76, His-142, and Asp-164. 364–368 (HVSGH) lines the substrate pocket.

The protein belongs to the metallo-beta-lactamase superfamily. RNA-metabolizing metallo-beta-lactamase-like family. Bacterial RNase J subfamily. As to quaternary structure, unclear whether it forms homodimers or belongs to a larger complex. According to probably does not form homodimers, while shows homodimer formation. Both reports show RNase J1 and J2 interaction, probably as a heterotetramer shows it is a component of a possible RNA degradosome complex composed of rny, rnjA, rnjB, pnp, pfkA and eno, while finds no evidence of an RNA degradosome complex. Zn(2+) is required as a cofactor.

Its subcellular location is the cytoplasm. Endonucleolytically cleaves the 5'-leader sequence of certain mRNAs. Endonuclease digestion by the RNase J1/J2 complex occurs at a different site and in some cases more efficiently than J1 or J2 alone. The exonuclease activity of the J1/J2 complex is highly processive on substrates longer than 5 nucleotides, on shorter substrates is distributive. Plays a role in mRNA maturation and stability. Appears to have a limited effect on 16S rRNA maturation, despite its similarity to RNase J1. This subunit alone has very poor 5'-3' exonuclease activity. The chain is Ribonuclease J2 from Bacillus subtilis (strain 168).